We begin with the raw amino-acid sequence, 233 residues long: Superoxide dismutase [Mn] 3.3, mitochondrial (233 aa).

A mitochondrion-targeting transit peptide spans 1 to 29 (MALRTLASKNALSFALGGAARPSAESARG). Mn(2+) contacts are provided by His57, His105, Asp194, and His198.

This sequence belongs to the iron/manganese superoxide dismutase family. In terms of assembly, homotetramer. The cofactor is Mn(2+). Predominantly expressed in the embryo late in embryogenesis.

It is found in the mitochondrion matrix. It carries out the reaction 2 superoxide + 2 H(+) = H2O2 + O2. Destroys superoxide anion radicals which are normally produced within the cells and which are toxic to biological systems. This Zea mays (Maize) protein is Superoxide dismutase [Mn] 3.3, mitochondrial (SODA.2).